A 156-amino-acid polypeptide reads, in one-letter code: MARYDNIAEFESDLNGKGLRVGIVMSRFNQDVCEGLLSACTEELQKLGVSPELIRIATVPGALEIPLVLQKMGQSGKFDALIALGAVIRGETYHFELVSNEMGAGITRIGLDTGIPIANGVLTTEDDDQALARMQEKGSDCARAAVEMANLLKVLQ.

5-amino-6-(D-ribitylamino)uracil-binding positions include Phe-28, 62–64 (ALE), and 86–88 (AVI). 91–92 (ET) serves as a coordination point for (2S)-2-hydroxy-3-oxobutyl phosphate. His-94 acts as the Proton donor in catalysis. 5-amino-6-(D-ribitylamino)uracil is bound at residue Asn-119. Residue Arg-133 participates in (2S)-2-hydroxy-3-oxobutyl phosphate binding.

This sequence belongs to the DMRL synthase family.

The enzyme catalyses (2S)-2-hydroxy-3-oxobutyl phosphate + 5-amino-6-(D-ribitylamino)uracil = 6,7-dimethyl-8-(1-D-ribityl)lumazine + phosphate + 2 H2O + H(+). It functions in the pathway cofactor biosynthesis; riboflavin biosynthesis; riboflavin from 2-hydroxy-3-oxobutyl phosphate and 5-amino-6-(D-ribitylamino)uracil: step 1/2. Its function is as follows. Catalyzes the formation of 6,7-dimethyl-8-ribityllumazine by condensation of 5-amino-6-(D-ribitylamino)uracil with 3,4-dihydroxy-2-butanone 4-phosphate. This is the penultimate step in the biosynthesis of riboflavin. The chain is 6,7-dimethyl-8-ribityllumazine synthase from Azoarcus sp. (strain BH72).